We begin with the raw amino-acid sequence, 790 residues long: Phenylalanine--tRNA ligase beta subunit (790 aa).

Residues 39 to 154 (PDSLNTVVTG…ENTPLGESAC (116 aa)) form the tRNA-binding domain. Residues 404-483 (SDPLSLNIRP…FVQKTQKILP (80 aa)) enclose the B5 domain. Mg(2+)-binding residues include D457, D463, E466, and E467. One can recognise an FDX-ACB domain in the interval 694–790 (PIYPSSSRDI…NLANIGKGNS (97 aa)).

This sequence belongs to the phenylalanyl-tRNA synthetase beta subunit family. Type 1 subfamily. In terms of assembly, tetramer of two alpha and two beta subunits. The cofactor is Mg(2+).

Its subcellular location is the cytoplasm. The catalysed reaction is tRNA(Phe) + L-phenylalanine + ATP = L-phenylalanyl-tRNA(Phe) + AMP + diphosphate + H(+). This is Phenylalanine--tRNA ligase beta subunit (pheT) from Chlamydia muridarum (strain MoPn / Nigg).